A 633-amino-acid chain; its full sequence is Chaperone protein HtpG (633 aa).

An a; substrate-binding region spans residues 1–341 (MTAPHETMSF…SADLPLNVSR (341 aa)). The b stretch occupies residues 342–562 (ELLQESRDVK…DGDMSGYLQR (221 aa)). The tract at residues 563 to 633 (LLKQAGQKAP…YVQRVNRLLA (71 aa)) is c.

Belongs to the heat shock protein 90 family. In terms of assembly, homodimer.

Its subcellular location is the cytoplasm. Molecular chaperone. Has ATPase activity. The protein is Chaperone protein HtpG of Cupriavidus metallidurans (strain ATCC 43123 / DSM 2839 / NBRC 102507 / CH34) (Ralstonia metallidurans).